Reading from the N-terminus, the 317-residue chain is Transaldolase (317 aa).

Residue Lys-131 is the Schiff-base intermediate with substrate of the active site.

Belongs to the transaldolase family. Type 1 subfamily. As to quaternary structure, homodimer.

It is found in the cytoplasm. It carries out the reaction D-sedoheptulose 7-phosphate + D-glyceraldehyde 3-phosphate = D-erythrose 4-phosphate + beta-D-fructose 6-phosphate. It functions in the pathway carbohydrate degradation; pentose phosphate pathway; D-glyceraldehyde 3-phosphate and beta-D-fructose 6-phosphate from D-ribose 5-phosphate and D-xylulose 5-phosphate (non-oxidative stage): step 2/3. Transaldolase is important for the balance of metabolites in the pentose-phosphate pathway. The protein is Transaldolase of Baumannia cicadellinicola subsp. Homalodisca coagulata.